The chain runs to 689 residues: Solute carrier family 22 member 23 (689 aa).

Disordered regions lie at residues 1–55 (MAID…PLPA) and 162–188 (TASW…GKGN). N-linked (GlcNAc...) asparagine glycosylation is present at Asn-24. A compositionally biased stretch (polar residues) spans 165–177 (WGTTSNRSNSSDT). Transmembrane regions (helical) follow at residues 229–249 (FSLL…ADWV) and 253–273 (PVLL…ALSV). Asn-274 carries an N-linked (GlcNAc...) asparagine glycan. 8 helical membrane passes run 283–303 (FFEG…RIEL), 310–330 (FIIT…MPGL), 339–359 (VLQA…SIFP), 462–482 (ADYY…CLVV), 489–509 (GGLL…LGLL), 541–561 (IAFS…SVFF), 572–592 (CGGL…APII), and 601–621 (FLHH…ILLL).

It belongs to the major facilitator (TC 2.A.1) superfamily. Organic cation transporter (TC 2.A.1.19) family. Expressed in many tissues, including brain, spinal cord, kidney, liver, eye, adipose tissue, lung, epididymis, adrenal gland, pineal gland, skeletal muscle, heart, spleen, thymus, ovary, uterus, testis and epididymis.

It localises to the membrane. This Rattus norvegicus (Rat) protein is Solute carrier family 22 member 23 (Slc22a23).